A 618-amino-acid chain; its full sequence is D-glucuronyl C5-epimerase (618 aa).

Over 1–11 the chain is Cytoplasmic; sequence MRCLAARVNYK. Residues 12–29 traverse the membrane as a helical; Signal-anchor for type II membrane protein segment; the sequence is TLIIICALFTLVTVLLWN. Over 30–618 the chain is Lumenal; the sequence is KCSSDKAIQF…YLKGSRAKHN (589 aa). Substrate is bound by residues Tyr180, 185 to 187, Gln202, Tyr210, Gln213, and Gln216; that span reads RDR. Positions 238, 240, 269, 270, and 393 each coordinate Ca(2+). Residues 430–433, 500–501, Asn511, Tyr515, Tyr561, Arg564, and 573–582 each bind substrate; these read KLGE, EY, and NLARWDYHTT.

This sequence belongs to the D-glucuronyl C5-epimerase family. As to quaternary structure, homodimer. Interacts with HS2ST1. Widely expressed with highest levels in lung and lowest levels in spleen.

Its subcellular location is the golgi apparatus membrane. The enzyme catalyses [heparosan-N-sulfate](n) = [heparan-N-sulfate](n). Its pathway is glycan metabolism; heparan sulfate biosynthesis. It participates in glycan metabolism; heparin biosynthesis. Converts D-glucuronic acid residues adjacent to N-sulfate sugar residues to L-iduronic acid residues, both in maturing heparan sulfate (HS) and heparin chains. This is important for further modifications that determine the specificity of interactions between these glycosaminoglycans and proteins. This Mus musculus (Mouse) protein is D-glucuronyl C5-epimerase (Glce).